The chain runs to 519 residues: Glucose-1-phosphate adenylyltransferase large subunit 3, chloroplastic/amyloplastic (519 aa).

Residues 1 to 74 (MQFSSVFPLE…DAGPDTLHVR (74 aa)) constitute a chloroplast transit peptide.

The protein belongs to the bacterial/plant glucose-1-phosphate adenylyltransferase family. In terms of assembly, heterotetramer composed of two small and two large subunits. In terms of tissue distribution, expressed in stems.

Its subcellular location is the plastid. It is found in the chloroplast. It carries out the reaction alpha-D-glucose 1-phosphate + ATP + H(+) = ADP-alpha-D-glucose + diphosphate. It participates in glycan biosynthesis; starch biosynthesis. Its activity is regulated as follows. Activated by 3'phosphoglycerate, inhibited by orthophosphate. Allosteric regulation. Its function is as follows. Involved in synthesis of starch. Catalyzes the synthesis of ADP-glucose, a molecule that serves as an activated glycosyl donor for alpha-1,4-glucan synthesis. Essential for starch synthesis in leaf chloroplasts. The chain is Glucose-1-phosphate adenylyltransferase large subunit 3, chloroplastic/amyloplastic from Oryza sativa subsp. japonica (Rice).